We begin with the raw amino-acid sequence, 104 residues long: L-rhamnose mutarotase (104 aa).

Tyr18 is a binding site for substrate. His22 (proton donor) is an active-site residue. Substrate contacts are provided by residues Tyr41 and 76–77; that span reads WW.

The protein belongs to the rhamnose mutarotase family. As to quaternary structure, homodimer.

It localises to the cytoplasm. The enzyme catalyses alpha-L-rhamnose = beta-L-rhamnose. The protein operates within carbohydrate metabolism; L-rhamnose metabolism. In terms of biological role, involved in the anomeric conversion of L-rhamnose. The protein is L-rhamnose mutarotase of Burkholderia orbicola (strain MC0-3).